Consider the following 114-residue polypeptide: Large ribosomal subunit protein P2 (114 aa).

A disordered region spans residues 84–114 (TDALQAGSKKGETKEGPKEESDEDMGFGLFD). Positions 92 to 102 (KKGETKEGPKE) are enriched in basic and acidic residues.

Belongs to the eukaryotic ribosomal protein P1/P2 family. As to quaternary structure, P1 and P2 exist as dimers at the large ribosomal subunit. Phosphorylated.

Plays an important role in the elongation step of protein synthesis. This chain is Large ribosomal subunit protein P2 (rpp-2), found in Brugia malayi (Filarial nematode worm).